The chain runs to 563 residues: Arginine--tRNA ligase (563 aa).

A 'HIGH' region motif is present at residues 120–130; sequence PNIAKPFHIGH.

This sequence belongs to the class-I aminoacyl-tRNA synthetase family. In terms of assembly, monomer.

It is found in the cytoplasm. The catalysed reaction is tRNA(Arg) + L-arginine + ATP = L-arginyl-tRNA(Arg) + AMP + diphosphate. The chain is Arginine--tRNA ligase from Clostridium botulinum (strain Langeland / NCTC 10281 / Type F).